The primary structure comprises 930 residues: uncharacterized protein (930 aa).

A Nuclear localization signal motif is present at residues 434–441; the sequence is IRRGISRK.

Its subcellular location is the nucleus. This is an uncharacterized protein from Chaetomium thermophilum (strain DSM 1495 / CBS 144.50 / IMI 039719) (Thermochaetoides thermophila).